Here is a 77-residue protein sequence, read N- to C-terminus: MKLIIFTGLVLFAIVSLIEVQADNERACLPQYQVCTDAPGNCCSNLVCDCYGRYKSGARRGRNCFCLQKGVIYKREN.

Positions 1–20 are cleaved as a signal peptide; it reads MKLIIFTGLVLFAIVSLIEV. Residues 21–26 constitute a propeptide that is removed on maturation; that stretch reads QADNER.

This sequence belongs to the neurotoxin 19 (CSTX) family. 08 (U8-Lctx) subfamily. In terms of processing, contains 4 disulfide bonds. In terms of tissue distribution, expressed by the venom gland.

It localises to the secreted. The sequence is that of U8-lycotoxin-Ls1h from Lycosa singoriensis (Wolf spider).